A 239-amino-acid polypeptide reads, in one-letter code: uncharacterized protein (239 aa).

The first 23 residues, 1–23 (MKTMVAMLLAAVGVAVSASSTLA), serve as a signal peptide directing secretion. A compositionally biased stretch (basic and acidic residues) spans 220–230 (AHPKQTLRDQR). Residues 220 to 239 (AHPKQTLRDQRPAGGDEITK) are disordered.

This is an uncharacterized protein from Sinorhizobium fredii (strain NBRC 101917 / NGR234).